A 374-amino-acid chain; its full sequence is Guanine nucleotide-binding protein subunit alpha-15 (374 aa).

Residues 41–374 (GELKLLLLGT…ARYLDEINLL (334 aa)) enclose the G-alpha domain. Residues 44–57 (KLLLLGTGESGKST) form a G1 motif region. GTP contacts are provided by residues 49-56 (GTGESGKS), 183-189 (LRSRMPT), 208-212 (DVGGQ), 277-280 (NKTD), and alanine 346. Serine 56 and threonine 189 together coordinate Mg(2+). The segment at 181–189 (DVLRSRMPT) is G2 motif. Residues 204–213 (LRIVDVGGQK) are G3 motif. The segment at 273–280 (ILFLNKTD) is G4 motif. A G5 motif region spans residues 344 to 349 (TCATDT).

It belongs to the G-alpha family. G(q) subfamily. In terms of assembly, g proteins are composed of 3 units; alpha, beta and gamma. The alpha chain contains the guanine nucleotide binding site.

Its function is as follows. Guanine nucleotide-binding proteins (G proteins) are involved as modulators or transducers in various transmembrane signaling systems. The polypeptide is Guanine nucleotide-binding protein subunit alpha-15 (GNA15) (Oryctolagus cuniculus (Rabbit)).